Here is an 819-residue protein sequence, read N- to C-terminus: MNSTNNTDSQNLDPNASEVEKLLDESAEAEEKVDDHTPPSELFILPLNKRPFFPGMAAPLLIEAGPHYEVLTLLAKSSQKHIGLVLTKKEDANTLKVGFNQLHRVGVSARILRIMPIEGGSAQVLLSIEDRIRIVKPIQDKYLKAKVSYHKENKELTEELKAYSISIVSIIKDLLKLNPLFKEELQIFLGHSDFTEPGKLADFSVALTTATREELQEILETTDMHDRIDKALVLLKKELDLSRLQSSINQKIEATITKSQKEFFLKEQLKTIKKELGLEKDDHAVDLEKFMERFNKRDVPQYAMDVIQDEMDKLQTLETSSAEYAVCRNYLDWLTIVPWGIQTKEYHDLKKAESILNKDHYGLEDIKQRILELISVGKLANGMKGSIICLVGPPGVGKTSIGRSIAKVLHRKFFRFSVGGMRDEAEIKGHRRTYIGAMPGKLVQALKQSQIMNPVIMIDEVDKIGSSYHGDPASALLEVLDPEQNKDFLDHYLDVRVDLSNVLFILTANVLDSIPDPLLDRMEVLRLSGYILEEKLQIATKYLVPRARKEMGLSAQNVTFQPEALKHMINNYAREAGVRTLNENIKKVLRKVALKIVQNQEKNLSKKSRFTITPKNLQDYLGKPVFSSDRFYEKTPVGVATGLAWTSLGGATLYIESVQVPSSSGKADMHLTGQAGDVMKESSQIAWTYLHSALERYAPGQPFFEKSQVHIHIPEGATPKDGPSAGITMVTSLLSLLLDVPVLNNLGMTGELTLTGRVLGIGGIREKLIAARRSKLNILIFPEDNRRDYDELPAYLKKGLKVHFVTHYDDVFKIAFPGV.

Over residues 1–14 (MNSTNNTDSQNLDP) the composition is skewed to polar residues. The disordered stretch occupies residues 1-40 (MNSTNNTDSQNLDPNASEVEKLLDESAEAEEKVDDHTPPS). Positions 18-38 (EVEKLLDESAEAEEKVDDHTP) are enriched in basic and acidic residues. In terms of domain architecture, Lon N-terminal spans 42-239 (LFILPLNKRP…KALVLLKKEL (198 aa)). Residue 392–399 (GPPGVGKT) participates in ATP binding. Positions 634–818 (KTPVGVATGL…DDVFKIAFPG (185 aa)) constitute a Lon proteolytic domain. Catalysis depends on residues Ser724 and Lys767.

Belongs to the peptidase S16 family. As to quaternary structure, homohexamer. Organized in a ring with a central cavity.

The protein localises to the cytoplasm. The enzyme catalyses Hydrolysis of proteins in presence of ATP.. In terms of biological role, ATP-dependent serine protease that mediates the selective degradation of mutant and abnormal proteins as well as certain short-lived regulatory proteins. Required for cellular homeostasis and for survival from DNA damage and developmental changes induced by stress. Degrades polypeptides processively to yield small peptide fragments that are 5 to 10 amino acids long. Binds to DNA in a double-stranded, site-specific manner. The polypeptide is Lon protease (Chlamydia trachomatis serovar D (strain ATCC VR-885 / DSM 19411 / UW-3/Cx)).